Here is a 356-residue protein sequence, read N- to C-terminus: Glucose 1-dehydrogenase (356 aa).

The tract at residues 1–26 is disordered; that stretch reads MDAIVVSKADRTPRLVDRPRPDPTPG. The span at 8-21 shows a compositional bias: basic and acidic residues; sequence KADRTPRLVDRPRP. Position 38 (D38) interacts with Zn(2+). T40 lines the substrate pocket. Zn(2+) is bound by residues H63 and E64. The segment at 86–107 is disordered; the sequence is TVRRPRGDPTPQFDRGQPDMAA. Residues E113 and E149 each coordinate substrate. E149 contacts Zn(2+). NADP(+)-binding positions include 180 to 183, 205 to 206, 270 to 272, and 300 to 302; these read NGSL, RR, LGV, and SVN. A substrate-binding site is contributed by N302.

Belongs to the zinc-containing alcohol dehydrogenase family. Glucose 1-dehydrogenase subfamily. It depends on Zn(2+) as a cofactor.

It carries out the reaction D-glucose + NAD(+) = D-glucono-1,5-lactone + NADH + H(+). The enzyme catalyses D-glucose + NADP(+) = D-glucono-1,5-lactone + NADPH + H(+). In terms of biological role, catalyzes the NAD(P)(+)-dependent oxidation of D-glucose to D-gluconate via gluconolactone. Can utilize both NAD(+) and NADP(+) as electron acceptor. Is involved in the degradation of glucose through a modified Entner-Doudoroff pathway. The protein is Glucose 1-dehydrogenase of Halobacterium salinarum (strain ATCC 700922 / JCM 11081 / NRC-1) (Halobacterium halobium).